A 274-amino-acid polypeptide reads, in one-letter code: Undecaprenyl-diphosphatase (274 aa).

Transmembrane regions (helical) follow at residues 44 to 64, 85 to 105, 109 to 129, 185 to 205, 214 to 234, and 247 to 267; these read AKVF…LVYW, LNVV…GKMI, LFIP…ILWA, ATDF…AYSL, VADI…AWLC, and FIPF…TAWT.

It belongs to the UppP family.

The protein resides in the cell inner membrane. The enzyme catalyses di-trans,octa-cis-undecaprenyl diphosphate + H2O = di-trans,octa-cis-undecaprenyl phosphate + phosphate + H(+). In terms of biological role, catalyzes the dephosphorylation of undecaprenyl diphosphate (UPP). Confers resistance to bacitracin. In Variovorax paradoxus (strain S110), this protein is Undecaprenyl-diphosphatase.